The chain runs to 230 residues: Demethylmenaquinone methyltransferase (230 aa).

S-adenosyl-L-methionine is bound by residues T62, D80, 100 to 101 (DG), and S117.

Belongs to the class I-like SAM-binding methyltransferase superfamily. MenG/UbiE family.

The enzyme catalyses a 2-demethylmenaquinol + S-adenosyl-L-methionine = a menaquinol + S-adenosyl-L-homocysteine + H(+). It participates in quinol/quinone metabolism; menaquinone biosynthesis; menaquinol from 1,4-dihydroxy-2-naphthoate: step 2/2. In terms of biological role, methyltransferase required for the conversion of demethylmenaquinol (DMKH2) to menaquinol (MKH2). The sequence is that of Demethylmenaquinone methyltransferase from Corynebacterium glutamicum (strain ATCC 13032 / DSM 20300 / JCM 1318 / BCRC 11384 / CCUG 27702 / LMG 3730 / NBRC 12168 / NCIMB 10025 / NRRL B-2784 / 534).